We begin with the raw amino-acid sequence, 192 residues long: Ribosomal RNA small subunit methyltransferase G (192 aa).

S-adenosyl-L-methionine-binding positions include glycine 59, 111-112 (IE), and arginine 124.

Belongs to the methyltransferase superfamily. RNA methyltransferase RsmG family.

Its subcellular location is the cytoplasm. Specifically methylates the N7 position of a guanine in 16S rRNA. The chain is Ribosomal RNA small subunit methyltransferase G from Mycoplasma genitalium (strain ATCC 33530 / DSM 19775 / NCTC 10195 / G37) (Mycoplasmoides genitalium).